A 341-amino-acid polypeptide reads, in one-letter code: L-threonine 3-dehydrogenase (341 aa).

Cysteine 38 contacts Zn(2+). Active-site charge relay system residues include threonine 40 and histidine 43. Positions 63, 64, 93, 96, 99, and 107 each coordinate Zn(2+). NAD(+)-binding positions include isoleucine 175, aspartate 195, arginine 200, 262-264 (LGI), and 286-287 (IY).

This sequence belongs to the zinc-containing alcohol dehydrogenase family. As to quaternary structure, homotetramer. Zn(2+) serves as cofactor.

The protein resides in the cytoplasm. The enzyme catalyses L-threonine + NAD(+) = (2S)-2-amino-3-oxobutanoate + NADH + H(+). It participates in amino-acid degradation; L-threonine degradation via oxydo-reductase pathway; glycine from L-threonine: step 1/2. Catalyzes the NAD(+)-dependent oxidation of L-threonine to 2-amino-3-ketobutyrate. The chain is L-threonine 3-dehydrogenase from Salmonella choleraesuis (strain SC-B67).